The following is a 104-amino-acid chain: Large ribosomal subunit protein uL24 (104 aa).

It belongs to the universal ribosomal protein uL24 family. Part of the 50S ribosomal subunit.

In terms of biological role, one of two assembly initiator proteins, it binds directly to the 5'-end of the 23S rRNA, where it nucleates assembly of the 50S subunit. Its function is as follows. One of the proteins that surrounds the polypeptide exit tunnel on the outside of the subunit. This chain is Large ribosomal subunit protein uL24, found in Buchnera aphidicola subsp. Baizongia pistaciae (strain Bp).